The sequence spans 299 residues: Apolipoprotein E (299 aa).

The N-terminal stretch at 1-18 (MKVLCTVLVVTLLAGCRA) is a signal peptide. The interval 74–245 (VLMEDTMKAV…RLEEVREQME (172 aa)) is 8 X 22 AA approximate tandem repeats. Tandem repeats lie at residues 75–95 (LMED…QELV), 96–117 (PMAE…ARLG), 118–139 (ADME…AMLG), 140–161 (QSAE…KRML), 162–183 (RDAE…EGAE), 184–206 (RGVS…RAAL), 207–225 (TSQP…LRGR), and 224–242 (GRLE…EVRE). M137 carries the methionine sulfoxide modification. At S141 the chain carries Phosphoserine. The tract at residues 152–162 (HLRKLRKRMLR) is LDL and other lipoprotein receptors binding. 156 to 159 (LRKR) contacts heparin. Residues 205–273 (ALTSQPLQER…GWFEPMVEDM (69 aa)) form a lipid-binding and lipoprotein association region. Residue 219 to 226 (GKQLRGRL) coordinates heparin. Positions 261 to 273 (RLKGWFEPMVEDM) are specificity for association with VLDL.

It belongs to the apolipoprotein A1/A4/E family. As to quaternary structure, homotetramer. May interact with ABCA1; functionally associated with ABCA1 in the biogenesis of HDLs. May interact with APP/A4 amyloid-beta peptide; the interaction is extremely stable in vitro but its physiological significance is unclear. May interact with MAPT. May interact with MAP2. In the cerebrospinal fluid, interacts with secreted SORL1. Interacts with PMEL; this allows the loading of PMEL luminal fragment on ILVs to induce fibril nucleation. In terms of processing, APOE exists as multiple glycosylated and sialylated glycoforms within cells and in plasma. The extent of glycosylation and sialylation are tissue and context specific. Post-translationally, glycated in plasma VLDL. Phosphorylated by FAM20C in the extracellular medium.

It localises to the secreted. The protein localises to the extracellular space. It is found in the extracellular matrix. Its subcellular location is the extracellular vesicle. The protein resides in the endosome. It localises to the multivesicular body. APOE is an apolipoprotein, a protein associating with lipid particles, that mainly functions in lipoprotein-mediated lipid transport between organs via the plasma and interstitial fluids. APOE is a core component of plasma lipoproteins and is involved in their production, conversion and clearance. Apolipoproteins are amphipathic molecules that interact both with lipids of the lipoprotein particle core and the aqueous environment of the plasma. As such, APOE associates with chylomicrons, chylomicron remnants, very low density lipoproteins (VLDL) and intermediate density lipoproteins (IDL) but shows a preferential binding to high-density lipoproteins (HDL). It also binds a wide range of cellular receptors including the LDL receptor/LDLR, the LDL receptor-related proteins LRP1, LRP2 and LRP8 and the very low-density lipoprotein receptor/VLDLR that mediate the cellular uptake of the APOE-containing lipoprotein particles. Finally, APOE also has a heparin-binding activity and binds heparan-sulfate proteoglycans on the surface of cells, a property that supports the capture and the receptor-mediated uptake of APOE-containing lipoproteins by cells. A main function of APOE is to mediate lipoprotein clearance through the uptake of chylomicrons, VLDLs, and HDLs by hepatocytes. APOE is also involved in the biosynthesis by the liver of VLDLs as well as their uptake by peripheral tissues ensuring the delivery of triglycerides and energy storage in muscle, heart and adipose tissues. By participating in the lipoprotein-mediated distribution of lipids among tissues, APOE plays a critical role in plasma and tissues lipid homeostasis. APOE is also involved in two steps of reverse cholesterol transport, the HDLs-mediated transport of cholesterol from peripheral tissues to the liver, and thereby plays an important role in cholesterol homeostasis. First, it is functionally associated with ABCA1 in the biogenesis of HDLs in tissues. Second, it is enriched in circulating HDLs and mediates their uptake by hepatocytes. APOE also plays an important role in lipid transport in the central nervous system, regulating neuron survival and sprouting. This Tympanoctomys barrerae (Plains viscacha rat) protein is Apolipoprotein E (Apoe).